Here is a 426-residue protein sequence, read N- to C-terminus: Casein kinase I (426 aa).

The region spanning 9 to 278 (YRISRKIGGG…LRKLLREMFV (270 aa)) is the Protein kinase domain. Residues 15-23 (IGGGSFGEI) and Lys38 each bind ATP. Catalysis depends on Asp128, which acts as the Proton acceptor. Disordered stretches follow at residues 340-360 (TTTT…TVSN) and 377-426 (PSYN…PPAK). Polar residues predominate over residues 345–360 (SSSQPSNVKNISTVSN). Low complexity predominate over residues 386 to 404 (QSPQQTTTTTSSSNPNQTT). The segment covering 414–426 (PQSSSTTTKPPAK) has biased composition (polar residues).

It belongs to the protein kinase superfamily. CK1 Ser/Thr protein kinase family. Casein kinase I subfamily. In terms of assembly, monomer. In terms of processing, autophosphorylated.

Its subcellular location is the cytoplasm. The protein resides in the nucleus. The catalysed reaction is L-seryl-[protein] + ATP = O-phospho-L-seryl-[protein] + ADP + H(+). The enzyme catalyses L-threonyl-[protein] + ATP = O-phospho-L-threonyl-[protein] + ADP + H(+). In terms of biological role, casein kinases are operationally defined by their preferential utilization of acidic proteins such as caseins as substrates. Can phosphorylate a large number of proteins. May have a role in DNA repair mechanism and support vegetative growth of the cells. In Dictyostelium discoideum (Social amoeba), this protein is Casein kinase I (cak1-1).